The sequence spans 392 residues: MCVSRRRNSGRPILRVRAPHLLRARPHRRSKLKHRRISRKRATLAGSAVVALVAAGFTFQTANASDDVPAFGAKTLSADAAGKLATTLDRDLGADAAGSYYDATAKTLVVNVVDEAGAEQVRQAGGKARIVENSLAELKSARGTLTEKATIPGTSWAVDPVSNKVLVTADSTVDGAAWKKLSAVVEGLGGKAELNRTAGEFTPLIAGGDAIWGSGSRCSLGFNVVKGGEPYFLTAGHCTESVTSWSDTQGGSEIGANEGSSFPENDYGLVKYTSDTAHPSEVNLYDGSTQAITQAGDATVGQAVTRSGSTTQVHDGEVTALDATVNYGNGDIVNGLIQTTVCAEPGDSGGALFAGDTALGLTSGGSGDCSSGGTTFFQPVPEALAAYGAEIG.

The first 64 residues, 1-64 (MCVSRRRNSG…AGFTFQTANA (64 aa)), serve as a signal peptide directing secretion. The propeptide occupies 65-204 (SDDVPAFGAK…NRTAGEFTPL (140 aa)). The cysteines at positions 218 and 238 are disulfide-linked. Residues H237, D266, and S348 each act as charge relay system in the active site. Residues C342 and C369 are joined by a disulfide bond.

This sequence belongs to the peptidase S1 family. Homodimer.

Functionally, has a primary specificity for large aliphatic or aromatic amino acids. In Streptomyces griseus, this protein is Streptogrisin-D (sprD).